A 152-amino-acid chain; its full sequence is Sulfur-rich protein (152 aa).

Positions 1-11 are enriched in polar residues; that stretch reads MSTTPIVSGVT. Positions 1-21 are disordered; it reads MSTTPIVSGVTSQNNSSENVS. Over residues 12-21 the composition is skewed to low complexity; the sequence is SQNNSSENVS. 2 helical membrane-spanning segments follow: residues 44–64 and 73–93; these read VGLAVVGIFLVILSIVLLFIL and IYLAIPAILGCVNICIGILSM.

It is found in the membrane. The protein is Sulfur-rich protein (srp) of Chlamydia muridarum (strain MoPn / Nigg).